The sequence spans 148 residues: Pseudoazurin (148 aa).

Positions 1–25 (MMIFRALIAAATLAIAIATTLPAAA) are cleaved as a signal peptide. The Plastocyanin-like domain occupies 30–118 (VKMLNSGPGG…MGMVALVVVG (89 aa)). Cu cation contacts are provided by His-65, Cys-103, His-106, and Met-111.

Cu cation serves as cofactor.

The protein localises to the periplasm. The chain is Pseudoazurin from Methylorubrum extorquens (strain ATCC 14718 / DSM 1338 / JCM 2805 / NCIMB 9133 / AM1) (Methylobacterium extorquens).